Consider the following 355-residue polypeptide: Probable butyrate kinase (355 aa).

Belongs to the acetokinase family.

It localises to the cytoplasm. It catalyses the reaction butanoate + ATP = butanoyl phosphate + ADP. This is Probable butyrate kinase from Listeria monocytogenes serovar 1/2a (strain ATCC BAA-679 / EGD-e).